The primary structure comprises 480 residues: ATP synthase subunit beta (480 aa).

Position 158–165 (158–165 (GGAGVGKT)) interacts with ATP.

The protein belongs to the ATPase alpha/beta chains family. As to quaternary structure, F-type ATPases have 2 components, CF(1) - the catalytic core - and CF(0) - the membrane proton channel. CF(1) has five subunits: alpha(3), beta(3), gamma(1), delta(1), epsilon(1). CF(0) has three main subunits: a(1), b(2) and c(9-12). The alpha and beta chains form an alternating ring which encloses part of the gamma chain. CF(1) is attached to CF(0) by a central stalk formed by the gamma and epsilon chains, while a peripheral stalk is formed by the delta and b chains.

Its subcellular location is the cell inner membrane. The catalysed reaction is ATP + H2O + 4 H(+)(in) = ADP + phosphate + 5 H(+)(out). Its function is as follows. Produces ATP from ADP in the presence of a proton gradient across the membrane. The catalytic sites are hosted primarily by the beta subunits. The polypeptide is ATP synthase subunit beta (Acidobacterium capsulatum (strain ATCC 51196 / DSM 11244 / BCRC 80197 / JCM 7670 / NBRC 15755 / NCIMB 13165 / 161)).